The following is a 134-amino-acid chain: MKKKHDGIVYETKEVLNPSPKVTHCCKSLWLKYSFQKAYMTQLVSSQPVPAMSRNPDHNLLSQPKEHSIVQKHHQEEIIHKLAMQLRHIGDNIDHRMVREDLQQDGRDALDHFVFFFFRRVQVLLHFFWNNHLL.

The Microbody targeting signal motif lies at Asn-131–Leu-134.

Its subcellular location is the peroxisome. The protein is Peroxisomal testis-specific protein 1 (PXT1) of Homo sapiens (Human).